Consider the following 424-residue polypeptide: ATP synthase subunit beta, mitochondrial (424 aa).

Residues 1–60 (MFRLSSGLLKGGACASRSRIPQLGRSLYSTATSAGADKTQGKIHTVIGAVVDVQFNHGRL) constitute a mitochondrion transit peptide. Residues 187 to 194 (GGAGVGKT), 188 to 195 (GAGVGKTV), 219 to 220 (ER), and Tyr374 contribute to the ATP site.

This sequence belongs to the ATPase alpha/beta chains family. In terms of assembly, F-type ATPases have 2 components, CF(1) - the catalytic core - and CF(0) - the membrane proton channel. CF(1) has five subunits: alpha(3), beta(3), gamma(1), delta(1), epsilon(1). CF(0) has three main subunits: a, b and c.

Its subcellular location is the mitochondrion. It localises to the mitochondrion inner membrane. The catalysed reaction is ATP + H2O + 4 H(+)(in) = ADP + phosphate + 5 H(+)(out). Its function is as follows. ATP synthase subunit beta; part of the gene cluster that mediates the biosynthesis of citreoviridin, an inhibitor of the of F1-ATPase beta-subunit. Mitochondrial membrane ATP synthase (F(1)F(0) ATP synthase or Complex V) produces ATP from ADP in the presence of a proton gradient across the membrane which is generated by electron transport complexes of the respiratory chain. Whereas ctvA to ctvD constitute the core biosynthetic gene cluster, ctvE acts as a self-resistance gene. This Aspergillus terreus (strain NIH 2624 / FGSC A1156) protein is ATP synthase subunit beta, mitochondrial.